The primary structure comprises 287 residues: MTYTTRQIGAKNTLDYKLFIEKDGKPVSPFHDIPLYADEDKQIFNMVVEIPRWTNAKLEITKEENLNPIIQDTKKGKLRYVRNCFPHHGYIHNYGAFPQTWEDPNVVHPETKAVGDNDPVDVLEIGETIGYTGQVKQVKVLGIMALLDEGETDWKVIAIDVNDPLAPKLHDIEDVEKYFPGQLRATNEWFRIYKIPDGKPENQFAFSGEAKNKKYALDIIRETHESWKQLIHGQVSDSKGISLTNTTLTDTPTYSAAAASEVPSASPQPDAPVDKSVDKWFFISGSA.

Position 79 (R79) interacts with diphosphate. 3 residues coordinate Mg(2+): D116, D121, and D153.

Belongs to the PPase family. Mg(2+) is required as a cofactor.

The protein localises to the cytoplasm. It catalyses the reaction diphosphate + H2O = 2 phosphate + H(+). The sequence is that of Inorganic pyrophosphatase (IPP1) from Zygosaccharomyces bailii.